The sequence spans 610 residues: tRNA uridine 5-carboxymethylaminomethyl modification enzyme MnmG (610 aa).

14–19 (GAGHAG) contacts FAD. 274 to 288 (GPRYCPSIEDKIVKF) is an NAD(+) binding site.

The protein belongs to the MnmG family. In terms of assembly, homodimer. Heterotetramer of two MnmE and two MnmG subunits. FAD is required as a cofactor.

It is found in the cytoplasm. Its function is as follows. NAD-binding protein involved in the addition of a carboxymethylaminomethyl (cmnm) group at the wobble position (U34) of certain tRNAs, forming tRNA-cmnm(5)s(2)U34. The sequence is that of tRNA uridine 5-carboxymethylaminomethyl modification enzyme MnmG from Chlamydia trachomatis serovar L2b (strain UCH-1/proctitis).